Consider the following 556-residue polypeptide: MDKRHDPSRRIIAPHGTQLQCKSWLTEAAMRMLMNNLHPDVAERPEDLVVYGGIGRAARDWQSYDKIIEVLKRLEDDQTLLVQSGKPVGVFTTHSNAPRVIIANSNLVPHWANWEHFNELDKKGLAMYGQMTAGSWIYIGSQGIVQGTYETFVAMAKQHFNGSSAGKWILTGGLGGMGGAQPLAGTMAGYSVLTCEVDETRIDFRMRTGYVDKKATSLDQALAMIYAANQSGKPVSVGLLANAADVFTELVTRGIVPDVVTDQTSAHDPLNGYLPQGWSLEYAAKMRKTDEAAVVKAAKQSMAVQVRAMLALQAAGAATTDYGNNIRQMAFEEGVTNAFDFPGFVPAYVRPLFCEGIGPFRWVALSGDPEDIYKTDAKVKELIPDNPQLHNWLDMARERIAFQGLPARICWVGLKDRARLALAFNEMVKNGELSAPIVIGRDHLDSGSVASPNRETEAMLDGSDAVSDWPLMNALLNTASGATWVSLHHGGGVGMGFSQHSGVVIVADGTDEAAVRLGRVLWNDPATGVMRHADAGYDIAKNCAKEQGLDLPMLGA.

NAD(+) is bound by residues 52–53 (GG), glutamine 130, 176–178 (GMG), glutamate 196, arginine 201, 242–243 (NA), 263–267 (QTSAH), 273–274 (YL), and tyrosine 322. Residue cysteine 410 is part of the active site. Glycine 492 contacts NAD(+).

The protein belongs to the urocanase family. NAD(+) is required as a cofactor.

It is found in the cytoplasm. The enzyme catalyses 4-imidazolone-5-propanoate = trans-urocanate + H2O. It participates in amino-acid degradation; L-histidine degradation into L-glutamate; N-formimidoyl-L-glutamate from L-histidine: step 2/3. In terms of biological role, catalyzes the conversion of urocanate to 4-imidazolone-5-propionate. This Shewanella frigidimarina (strain NCIMB 400) protein is Urocanate hydratase.